The chain runs to 287 residues: Protease HtpX (287 aa).

Helical transmembrane passes span Val-4–Ile-24 and Gly-33–Ile-53. His-139 is a binding site for Zn(2+). Residue Glu-140 is part of the active site. A Zn(2+)-binding site is contributed by His-143. 2 helical membrane passes run Leu-154–Ile-174 and Gly-195–Phe-215. Residue Glu-220 participates in Zn(2+) binding.

Belongs to the peptidase M48B family. It depends on Zn(2+) as a cofactor.

The protein localises to the cell inner membrane. In Shewanella denitrificans (strain OS217 / ATCC BAA-1090 / DSM 15013), this protein is Protease HtpX.